The sequence spans 146 residues: Putative serine protease inhibitor SAV_2156 (146 aa).

An N-terminal signal peptide occupies residues 1–26 (MTKTTMAVPGALLAAIALLSAAPAQA). 2 disulfides stabilise this stretch: Cys-57-Cys-70 and Cys-90-Cys-120.

Belongs to the protease inhibitor I16 (SSI) family.

It is found in the secreted. The protein is Putative serine protease inhibitor SAV_2156 of Streptomyces avermitilis (strain ATCC 31267 / DSM 46492 / JCM 5070 / NBRC 14893 / NCIMB 12804 / NRRL 8165 / MA-4680).